Consider the following 338-residue polypeptide: Large ribosomal subunit protein uL3 (338 aa).

Disordered regions lie at residues 230–256 (HRKG…RPGQ) and 315–338 (PARP…SQQP).

The protein belongs to the universal ribosomal protein uL3 family. Part of the 50S ribosomal subunit. Forms a cluster with proteins L14 and L24e.

One of the primary rRNA binding proteins, it binds directly near the 3'-end of the 23S rRNA, where it nucleates assembly of the 50S subunit. The sequence is that of Large ribosomal subunit protein uL3 from Pyrobaculum arsenaticum (strain DSM 13514 / JCM 11321 / PZ6).